Consider the following 357-residue polypeptide: MTSEAASKDPISVLSGFGAGTATSASKNGGRTTPSALTPRPRSGFVETEQVRDLTRRGLGFLNAGYPLHFRGPAGTGKTTLALHVAAQLGRPVIIITGDNELGTADLVGSQRGYHYRKVVDQFIHNVTKLEETANQHWTDHRLTTACREGFTLVYDEFTRSRPETHNVLLGVFEERMLFLPAQAREECYIKVHPEFRAIFTSNPQEYAGVHASQDALADRLATIDVDYPDRAMELAVASARTGMAEASAARIIDLVRAFRASGDYQQTPTMRASLMIARVAALEGLDVSVDDPRFVQLCSDALESRIFSGQRAEAVAREQRRAALYALIETYCPSVAKPRARRAGGGARAGVEGALP.

Over residues 22-36 the composition is skewed to polar residues; sequence ATSASKNGGRTTPSA. The segment at 22-43 is disordered; the sequence is ATSASKNGGRTTPSALTPRPRS. 72 to 79 lines the ATP pocket; the sequence is GPAGTGKT.

Belongs to the CbbQ/NirQ/NorQ/GpvN family. Forms homodimers, probably interacts with other GV proteins including GvpA.

The protein resides in the gas vesicle. It localises to the cytoplasm. It catalyses the reaction ATP + H2O = ADP + phosphate + H(+). An ATPase that functions in gas vesicle formation. A minor component of the gas vesicle, also found in soluble extracts. Gas vesicles (GV) are hollow, gas filled proteinaceous nanostructures. During planktonic growth they allow positioning of the organism at a favorable depth for light or nutrient acquisition. The protein is Gas vesicle ATPase GvpN of Ancylobacter aquaticus.